Consider the following 535-residue polypeptide: Growth-regulating factor 2 (535 aa).

The region spanning 164 to 199 (PFTLTQWAELEQQALIYKYITANVPVPSSLLISIKK) is the QLQ domain. A WRC domain is found at 227-271 (DPEPGRCRRTDGKKWRCSRDAVPDQKYCERHINRGRHRSRKPVEV). 2 short sequence motifs (bipartite nuclear localization signal) span residues 232–242 (RCRRTDGKKWR) and 260–267 (RGRHRSRK). 3 disordered regions span residues 260–308 (RGRH…ASSN), 417–437 (PIASSSPSSTHNNNNAQEKTT), and 514–535 (SSVSSPIAENNRHNGDYFHYTT). Positions 272 to 291 (QSGQNQTAAAASKAVTTPQQ) are enriched in polar residues. A compositionally biased stretch (low complexity) spans 299-308 (NRSNARASSN). Positions 426 to 437 (THNNNNAQEKTT) are enriched in polar residues.

The protein belongs to the GRF family. Interacts with GIF1. Strongly expressed in actively growing and developing tissues, such as roots, upper stems, and shoot tips containing the shoot apical meristem (SAM) and flower buds. Detected in young leaf primordium. Also expressed in mature flowers, but weakly expressed in mature stems and leaves.

The protein localises to the nucleus. Transcription activator that plays a role in the regulation of cell expansion in leaf and cotyledons tissues. Component of a network formed by miR396, the GRFs and their interacting factors (GIFs) acting in the regulation of meristem function, at least partially through the control of cell proliferation. The polypeptide is Growth-regulating factor 2 (GRF2) (Arabidopsis thaliana (Mouse-ear cress)).